The following is a 697-amino-acid chain: Long-chain-fatty-acid--CoA ligase 6 (697 aa).

The chain crosses the membrane as a helical; Signal-anchor for type III membrane protein span at residues 25-45; it reads LSATTLVSMGALAAILAYWFT. The Cytoplasmic portion of the chain corresponds to 46 to 697; the sequence is HRPKALQPPC…QIEELYSISM (652 aa).

The protein belongs to the ATP-dependent AMP-binding enzyme family. Mg(2+) is required as a cofactor. As to expression, expressed predominantly in erythrocyte precursors, in particular in reticulocytes, fetal blood cells derived from fetal liver, hemopoietic stem cells from cord blood, bone marrow and brain.

The protein localises to the mitochondrion outer membrane. It localises to the peroxisome membrane. The protein resides in the microsome membrane. Its subcellular location is the endoplasmic reticulum membrane. The enzyme catalyses a long-chain fatty acid + ATP + CoA = a long-chain fatty acyl-CoA + AMP + diphosphate. It carries out the reaction (5Z,8Z,11Z,14Z)-eicosatetraenoate + ATP + CoA = (5Z,8Z,11Z,14Z)-eicosatetraenoyl-CoA + AMP + diphosphate. The catalysed reaction is hexadecanoate + ATP + CoA = hexadecanoyl-CoA + AMP + diphosphate. It catalyses the reaction (E)-hexadec-2-enoate + ATP + CoA = (2E)-hexadecenoyl-CoA + AMP + diphosphate. The enzyme catalyses 15-hydroxy-(5Z,8Z,11Z,13E)-eicosatetraenoate + ATP + CoA = 15-hydroxy-(5Z,8Z,11Z,13E)-eicosatetraenoyl-CoA + AMP + diphosphate. It carries out the reaction 12-hydroxy-(5Z,8Z,10E,14Z)-eicosatetraenoate + ATP + CoA = 12-hydroxy-(5Z,8Z,10E,14Z)-eicosatetraenoyl-CoA + AMP + diphosphate. The catalysed reaction is 5-hydroxy-(6E,8Z,11Z,14Z)-eicosatetraenoate + ATP + CoA = 5-hydroxy-(6E,8Z,11Z,14Z)-eicosatetraenoyl-CoA + AMP + diphosphate. In terms of biological role, catalyzes the conversion of long-chain fatty acids to their active form acyl-CoA for both synthesis of cellular lipids, and degradation via beta-oxidation. Plays an important role in fatty acid metabolism in brain and the acyl-CoAs produced may be utilized exclusively for the synthesis of the brain lipid. This Homo sapiens (Human) protein is Long-chain-fatty-acid--CoA ligase 6.